Consider the following 864-residue polypeptide: Mitochondrial 15S rRNA processing factor CCM1 (864 aa).

The transit peptide at 1–76 (MYMARCGPKN…REFSNTLKER (76 aa)) directs the protein to the mitochondrion. 2 PPR repeats span residues 319–353 (NKQN…STKH) and 356–390 (DICT…NIKP).

The protein belongs to the CCM1 family. As to quaternary structure, binds to mitochondrial small subunit 15S rRNA.

The protein resides in the mitochondrion. Regulates mitochondrial small subunit maturation by controlling 15S rRNA 5'-end processing. Localizes to the 5' precursor of the 15S rRNA in a position that is subsequently occupied by mS47 in the mature yeast mtSSU. Uses structure and sequence-specific RNA recognition, binding to a single-stranded region of the precursor and specifically recognizing bases -6 to -1. The exchange of Ccm1 for mS47 is coupled to the irreversible removal of precursor rRNA that is accompanied by conformational changes of the mitoribosomal proteins uS5m and mS26. These conformational changes signal completion of 5'-end rRNA processing through protection of the mature 5'-end of the 15S rRNA and stabilization of mS47. The removal of the 5' precursor together with the dissociation of Ccm1 may be catalyzed by the 5'-3' exoribonuclease Pet127. Involved in the specific removal of group I introns in mitochondrial encoded transcripts. The sequence is that of Mitochondrial 15S rRNA processing factor CCM1 (CCM1) from Saccharomyces cerevisiae (strain Lalvin EC1118 / Prise de mousse) (Baker's yeast).